The primary structure comprises 421 residues: Imidazolonepropionase (421 aa).

Fe(3+) is bound by residues histidine 81 and histidine 83. The Zn(2+) site is built by histidine 81 and histidine 83. Residues arginine 90, tyrosine 153, and histidine 186 each coordinate 4-imidazolone-5-propanoate. Tyrosine 153 contacts N-formimidoyl-L-glutamate. Histidine 251 lines the Fe(3+) pocket. Residue histidine 251 participates in Zn(2+) binding. Glutamate 254 is a 4-imidazolone-5-propanoate binding site. Aspartate 326 lines the Fe(3+) pocket. Aspartate 326 contributes to the Zn(2+) binding site. Residues asparagine 328 and glycine 330 each coordinate N-formimidoyl-L-glutamate. Serine 331 is a 4-imidazolone-5-propanoate binding site.

This sequence belongs to the metallo-dependent hydrolases superfamily. HutI family. The cofactor is Zn(2+). Fe(3+) serves as cofactor.

Its subcellular location is the cytoplasm. It catalyses the reaction 4-imidazolone-5-propanoate + H2O = N-formimidoyl-L-glutamate. It participates in amino-acid degradation; L-histidine degradation into L-glutamate; N-formimidoyl-L-glutamate from L-histidine: step 3/3. Functionally, catalyzes the hydrolytic cleavage of the carbon-nitrogen bond in imidazolone-5-propanoate to yield N-formimidoyl-L-glutamate. It is the third step in the universal histidine degradation pathway. This chain is Imidazolonepropionase, found in Streptococcus pyogenes serotype M4 (strain MGAS10750).